The chain runs to 376 residues: Light-dependent chlorophyll f synthase (376 aa).

The disordered stretch occupies residues 1 to 22 (MKLESDHVIATSDSSDYTSEPT). Residues 11–22 (TSDSSDYTSEPT) are compositionally biased toward polar residues. The next 5 helical transmembrane spans lie at 51-68 (YVGW…TAAT), 140-155 (HFLI…EWEL), 164-178 (WISL…ASVS), 219-240 (LHQL…HGSL), and 298-312 (FLAA…SAAL). An a chlorophyll-binding site is contributed by His140. His220 is a binding site for a chlorophyll.

It belongs to the reaction center PufL/M/PsbA/D family. Homodimer.

It localises to the cellular thylakoid membrane. Functionally, synthesizes chlorophyll f or chlorophyllide f (Chl f, 2-formyl chlorophyll a), probably by oxidation of chlorophyll a or chlorophyllide a and reduction of plastoquinone. The reaction is probably light-dependent. Chl f absorbs far red light (FRL, 707 nm in 100% methanol), and is synthesized when cells are grown in FRL, where it provides the advantage of extending the spectral range of harvested light in terrestrial cyanobacteria. When ectopically expressed in Synechococcus PCC 7002 (which does not grow in FRL and does not make Chl f) produces Chl f (0.059% of total chlorophyll). The chain is Light-dependent chlorophyll f synthase from Chlorogloeopsis fritschii (strain PCC 9212).